The following is a 260-amino-acid chain: UPF0246 protein BURPS668_1321 (260 aa).

Belongs to the UPF0246 family.

The protein is UPF0246 protein BURPS668_1321 of Burkholderia pseudomallei (strain 668).